The sequence spans 100 residues: MTPWFLYLIRTADNKLYTGITTDVERRYQQHQSGKGAKALRGKGELTLAFSAPVGNRSLALRAEYRVKQLTKRQKERLVAEGAVFAELLNSLQTPEIKSD.

Positions 2-77 constitute a GIY-YIG domain; it reads TPWFLYLIRT…KQLTKRQKER (76 aa).

Belongs to the UPF0213 family.

The chain is UPF0213 protein YhbQ from Escherichia coli O127:H6 (strain E2348/69 / EPEC).